Here is a 1396-residue protein sequence, read N- to C-terminus: DNA-directed RNA polymerase subunit beta' (1396 aa).

Residues cysteine 71, cysteine 73, cysteine 86, and cysteine 89 each contribute to the Zn(2+) site. Mg(2+)-binding residues include aspartate 462, aspartate 464, and aspartate 466. 4 residues coordinate Zn(2+): cysteine 810, cysteine 884, cysteine 891, and cysteine 894. The segment covering 1372–1382 (DEQLAQQREDA) has biased composition (basic and acidic residues). The interval 1372–1396 (DEQLAQQREDAMEPLPAEIALSDAE) is disordered.

It belongs to the RNA polymerase beta' chain family. In terms of assembly, the RNAP catalytic core consists of 2 alpha, 1 beta, 1 beta' and 1 omega subunit. When a sigma factor is associated with the core the holoenzyme is formed, which can initiate transcription. Mg(2+) is required as a cofactor. It depends on Zn(2+) as a cofactor.

It carries out the reaction RNA(n) + a ribonucleoside 5'-triphosphate = RNA(n+1) + diphosphate. Its function is as follows. DNA-dependent RNA polymerase catalyzes the transcription of DNA into RNA using the four ribonucleoside triphosphates as substrates. This Caulobacter vibrioides (strain ATCC 19089 / CIP 103742 / CB 15) (Caulobacter crescentus) protein is DNA-directed RNA polymerase subunit beta'.